Here is a 605-residue protein sequence, read N- to C-terminus: Elongation factor 4 (605 aa).

Residues 5 to 187 (ALIRNFSIIA…AVVERIPPPK (183 aa)) enclose the tr-type G domain. Residues 17–22 (DHGKST) and 134–137 (NKID) contribute to the GTP site.

The protein belongs to the TRAFAC class translation factor GTPase superfamily. Classic translation factor GTPase family. LepA subfamily.

It localises to the cell inner membrane. The enzyme catalyses GTP + H2O = GDP + phosphate + H(+). In terms of biological role, required for accurate and efficient protein synthesis under certain stress conditions. May act as a fidelity factor of the translation reaction, by catalyzing a one-codon backward translocation of tRNAs on improperly translocated ribosomes. Back-translocation proceeds from a post-translocation (POST) complex to a pre-translocation (PRE) complex, thus giving elongation factor G a second chance to translocate the tRNAs correctly. Binds to ribosomes in a GTP-dependent manner. This Novosphingobium aromaticivorans (strain ATCC 700278 / DSM 12444 / CCUG 56034 / CIP 105152 / NBRC 16084 / F199) protein is Elongation factor 4.